The sequence spans 243 residues: LexA repressor 2 (243 aa).

The H-T-H motif DNA-binding region spans 48–68 (IREIGDAVGLTSTSSVAHQLR). Residues serine 167 and lysine 204 each act as for autocatalytic cleavage activity in the active site.

This sequence belongs to the peptidase S24 family. In terms of assembly, homodimer.

It carries out the reaction Hydrolysis of Ala-|-Gly bond in repressor LexA.. Represses a number of genes involved in the response to DNA damage (SOS response), including recA and lexA. In the presence of single-stranded DNA, RecA interacts with LexA causing an autocatalytic cleavage which disrupts the DNA-binding part of LexA, leading to derepression of the SOS regulon and eventually DNA repair. The chain is LexA repressor 2 from Nocardia farcinica (strain IFM 10152).